Reading from the N-terminus, the 177-residue chain is Peptidyl-tRNA hydrolase (177 aa).

Residue Tyr-14 coordinates tRNA. His-19 serves as the catalytic Proton acceptor. TRNA-binding residues include Phe-64, Asn-66, and Asn-112.

This sequence belongs to the PTH family. As to quaternary structure, monomer.

It localises to the cytoplasm. It catalyses the reaction an N-acyl-L-alpha-aminoacyl-tRNA + H2O = an N-acyl-L-amino acid + a tRNA + H(+). Functionally, hydrolyzes ribosome-free peptidyl-tRNAs (with 1 or more amino acids incorporated), which drop off the ribosome during protein synthesis, or as a result of ribosome stalling. In terms of biological role, catalyzes the release of premature peptidyl moieties from peptidyl-tRNA molecules trapped in stalled 50S ribosomal subunits, and thus maintains levels of free tRNAs and 50S ribosomes. The protein is Peptidyl-tRNA hydrolase of Latilactobacillus sakei (Lactobacillus sakei).